A 154-amino-acid chain; its full sequence is MTETIYSGLKQLGGATLLPESPDKAELERVRNPQADVAYNVRFTAPEFTSLCPMTGQPDFAHLVIDYVPGEWLVESKSLKLYLGSFRNHGAFHEDCTVSIGRRLAGFLAPRWLRIGGYWYPRGGMPIDVFWQTGPMPEGVWIPDQDVPPYRGRG.

The active-site Thioimide intermediate is cysteine 52. Residue aspartate 59 is the Proton donor of the active site. Substrate contacts are provided by residues 74-76 (VES) and 93-94 (HE).

This sequence belongs to the GTP cyclohydrolase I family. QueF type 1 subfamily.

It is found in the cytoplasm. It catalyses the reaction 7-aminomethyl-7-carbaguanine + 2 NADP(+) = 7-cyano-7-deazaguanine + 2 NADPH + 3 H(+). The protein operates within tRNA modification; tRNA-queuosine biosynthesis. Functionally, catalyzes the NADPH-dependent reduction of 7-cyano-7-deazaguanine (preQ0) to 7-aminomethyl-7-deazaguanine (preQ1). This Paracoccus denitrificans (strain Pd 1222) protein is NADPH-dependent 7-cyano-7-deazaguanine reductase.